A 524-amino-acid polypeptide reads, in one-letter code: MSNIYALEPHTNAKVILHTTSGDIEIELWGKEAPRATRNFIQLCLEGYYDNTIFHRIVPGFLVQGGDPTGTGQGGESVYEDGFPDEFHSRLRFNRRGLVGVANTGQNDNGSQFFITLDRADELTKRHTLFGRVAGDTLFNVMKMTELEIDENERPLYPPRIKRTEIVINPFDDILPRITEREKRQQKELEKKKMLEEAKKKKAPKKKQLNLLSFGEEAAELEPPSHTVEKTKMKSAYDFMETSAPTPTELIEELKKPVKEESTVISEKKDDAKQEEENKKAEEEERKRKKALEEERKRQKEEEKKKMQENTSESRASAIEKLKQDIRNLSKTSSNTSDELIPKKDKKRSLVELEREKYASQKRKKMKKGDDTDVFNKLMSFQKKLSTAKEDEDAAAAKRDQPPCEIHGIPGCESCRDTTQDAEEDVSDAGWISHKLIFEKDLKGKDLMKRRETVDDYVVIDPRDREAKAKQEEYERKKGIKSSSSSQRRDRMDHDDKRYRTEKRSRSDRHRRSRSRDRYDDRRR.

Residues 11–166 form the PPIase cyclophilin-type domain; that stretch reads TNAKVILHTT…YPPRIKRTEI (156 aa). Disordered regions lie at residues 243–371, 389–417, and 451–524; these read SAPT…KGDD, KEDE…SCRD, and RETV…DRRR. 2 stretches are compositionally biased toward basic and acidic residues: residues 252 to 308 and 318 to 328; these read EELK…KKMQ and AIEKLKQDIRN. Residues 329–338 show a composition bias toward polar residues; it reads LSKTSSNTSD. The segment covering 340–359 has biased composition (basic and acidic residues); the sequence is LIPKKDKKRSLVELEREKYA. Basic and acidic residues-rich tracts occupy residues 461 to 477 and 487 to 505; these read DPRD…YERK and QRRD…EKRS. The span at 506–515 shows a compositional bias: basic residues; it reads RSDRHRRSRS.

The protein belongs to the cyclophilin-type PPIase family. CWC27 subfamily. Associated with the spliceosome.

The protein resides in the cytoplasm. It is found in the nucleus. It carries out the reaction [protein]-peptidylproline (omega=180) = [protein]-peptidylproline (omega=0). PPIases accelerate the folding of proteins. It catalyzes the cis-trans isomerization of proline imidic peptide bonds in oligopeptides. Involved in pre-mRNA splicing. This chain is Peptidyl-prolyl isomerase cwc27 (cwc27), found in Rhizopus delemar (strain RA 99-880 / ATCC MYA-4621 / FGSC 9543 / NRRL 43880) (Mucormycosis agent).